A 152-amino-acid polypeptide reads, in one-letter code: SsrA-binding protein (152 aa).

Belongs to the SmpB family.

It is found in the cytoplasm. Required for rescue of stalled ribosomes mediated by trans-translation. Binds to transfer-messenger RNA (tmRNA), required for stable association of tmRNA with ribosomes. tmRNA and SmpB together mimic tRNA shape, replacing the anticodon stem-loop with SmpB. tmRNA is encoded by the ssrA gene; the 2 termini fold to resemble tRNA(Ala) and it encodes a 'tag peptide', a short internal open reading frame. During trans-translation Ala-aminoacylated tmRNA acts like a tRNA, entering the A-site of stalled ribosomes, displacing the stalled mRNA. The ribosome then switches to translate the ORF on the tmRNA; the nascent peptide is terminated with the 'tag peptide' encoded by the tmRNA and targeted for degradation. The ribosome is freed to recommence translation, which seems to be the essential function of trans-translation. The polypeptide is SsrA-binding protein (Helicobacter pylori (strain HPAG1)).